Here is a 159-residue protein sequence, read N- to C-terminus: Cyclic pyranopterin monophosphate synthase (159 aa).

Residues 75–77 (LCH) and 113–114 (ME) each bind substrate. Residue aspartate 128 is part of the active site.

It belongs to the MoaC family. Homohexamer; trimer of dimers.

The enzyme catalyses (8S)-3',8-cyclo-7,8-dihydroguanosine 5'-triphosphate = cyclic pyranopterin phosphate + diphosphate. It functions in the pathway cofactor biosynthesis; molybdopterin biosynthesis. Catalyzes the conversion of (8S)-3',8-cyclo-7,8-dihydroguanosine 5'-triphosphate to cyclic pyranopterin monophosphate (cPMP). The polypeptide is Cyclic pyranopterin monophosphate synthase (Cupriavidus necator (strain ATCC 17699 / DSM 428 / KCTC 22496 / NCIMB 10442 / H16 / Stanier 337) (Ralstonia eutropha)).